The chain runs to 283 residues: Pantothenate synthetase (283 aa).

30–37 (MGNLHDGH) contacts ATP. H37 serves as the catalytic Proton donor. Residue Q61 participates in (R)-pantoate binding. Residue Q61 participates in beta-alanine binding. 149–152 (GEKD) serves as a coordination point for ATP. Q155 provides a ligand contact to (R)-pantoate. ATP is bound at residue 186 to 189 (LSSR).

The protein belongs to the pantothenate synthetase family. Homodimer.

The protein localises to the cytoplasm. It catalyses the reaction (R)-pantoate + beta-alanine + ATP = (R)-pantothenate + AMP + diphosphate + H(+). It functions in the pathway cofactor biosynthesis; (R)-pantothenate biosynthesis; (R)-pantothenate from (R)-pantoate and beta-alanine: step 1/1. Catalyzes the condensation of pantoate with beta-alanine in an ATP-dependent reaction via a pantoyl-adenylate intermediate. The protein is Pantothenate synthetase of Escherichia coli O6:K15:H31 (strain 536 / UPEC).